The chain runs to 361 residues: Adenosine kinase (361 aa).

The Nuclear localization signal signature appears at 7–15 (PKPKKLKVE). Adenosine is bound at residue Asp-34. A Mg(2+)-binding site is contributed by Ser-48. Tyr-76 carries the phosphotyrosine modification. Asp-146 and Asn-147 together coordinate Mg(2+). Gln-305 lines the adenosine pocket. The active site involves Asp-316. Asp-316 functions as the Proton acceptor in the catalytic mechanism.

It belongs to the carbohydrate kinase PfkB family. In terms of assembly, monomer. Mg(2+) serves as cofactor. The N-terminus is blocked.

It localises to the nucleus. It carries out the reaction adenosine + ATP = AMP + ADP + H(+). It participates in purine metabolism; AMP biosynthesis via salvage pathway; AMP from adenosine: step 1/1. Its activity is regulated as follows. Activity is inhibited by 5-iodotubercidin and 5'-amino-5'-deoxyadenosine. Functionally, catalyzes the phosphorylation of the purine nucleoside adenosine at the 5' position in an ATP-dependent manner. Serves as a potential regulator of concentrations of extracellular adenosine and intracellular adenine nucleotides. This Cricetulus griseus (Chinese hamster) protein is Adenosine kinase (ADK).